Consider the following 244-residue polypeptide: MDKSELVQKAKLAEQAERYDDMAAAMKAVTEQGHELSNEERNLLSVAYKNVVGARRSSWRVISSIEQKTERNEKKQQMGREYREKIEAELQDICNDVLELLDKYLIVNATQPESKVFYLKMKGDYYRYLSEVASGDNKQTTVANSQQAYQEAFEISKKEMQPTHPIRLGLALNFSVFYYEILNSPEKACNLAKTAFDEAIAELDTLNEESYKDSTLIMQLLRDNLTLWTSENQGDEGDAGEGEN.

The residue at position 1 (Met-1) is an N-acetylmethionine. Phosphoserine is present on Ser-184.

It belongs to the 14-3-3 family. As to quaternary structure, homodimer, and heterodimer with other family members. In terms of processing, phosphorylated.

The protein localises to the cytoplasm. In terms of biological role, adapter protein implicated in the regulation of a large spectrum of both general and specialized signaling pathways. Binds to a large number of partners, usually by recognition of a phosphoserine or phosphothreonine motif. Binding generally results in the modulation of the activity of the binding partner. The polypeptide is 14-3-3 protein beta/alpha (YWHAB) (Gallus gallus (Chicken)).